The following is a 362-amino-acid chain: UDP-N-acetylglucosamine--N-acetylmuramyl-(pentapeptide) pyrophosphoryl-undecaprenol N-acetylglucosamine transferase (362 aa).

UDP-N-acetyl-alpha-D-glucosamine is bound by residues Arg166, Ser196, and Gln290.

It belongs to the glycosyltransferase 28 family. MurG subfamily.

Its subcellular location is the cell membrane. The enzyme catalyses Mur2Ac(oyl-L-Ala-gamma-D-Glu-L-Lys-D-Ala-D-Ala)-di-trans,octa-cis-undecaprenyl diphosphate + UDP-N-acetyl-alpha-D-glucosamine = beta-D-GlcNAc-(1-&gt;4)-Mur2Ac(oyl-L-Ala-gamma-D-Glu-L-Lys-D-Ala-D-Ala)-di-trans,octa-cis-undecaprenyl diphosphate + UDP + H(+). It participates in cell wall biogenesis; peptidoglycan biosynthesis. In terms of biological role, cell wall formation. Catalyzes the transfer of a GlcNAc subunit on undecaprenyl-pyrophosphoryl-MurNAc-pentapeptide (lipid intermediate I) to form undecaprenyl-pyrophosphoryl-MurNAc-(pentapeptide)GlcNAc (lipid intermediate II). In Staphylococcus carnosus (strain TM300), this protein is UDP-N-acetylglucosamine--N-acetylmuramyl-(pentapeptide) pyrophosphoryl-undecaprenol N-acetylglucosamine transferase.